The primary structure comprises 566 residues: NAD-dependent malic enzyme (566 aa).

The active-site Proton donor is tyrosine 105. NAD(+) is bound at residue arginine 158. The active-site Proton acceptor is lysine 176. 3 residues coordinate a divalent metal cation: glutamate 247, aspartate 248, and aspartate 271. NAD(+)-binding residues include aspartate 271 and asparagine 419.

Belongs to the malic enzymes family. As to quaternary structure, homotetramer. It depends on Mg(2+) as a cofactor. Requires Mn(2+) as cofactor.

The enzyme catalyses (S)-malate + NAD(+) = pyruvate + CO2 + NADH. The catalysed reaction is oxaloacetate + H(+) = pyruvate + CO2. The sequence is that of NAD-dependent malic enzyme from Acinetobacter baylyi (strain ATCC 33305 / BD413 / ADP1).